Reading from the N-terminus, the 194-residue chain is Ras-related protein Rab-22A (194 aa).

Residue 12–20 (GDTGVGKSS) coordinates GTP. The Effector region signature appears at 34–42 (INPTIGASF). GTP is bound by residues 60–64 (DTAGQ), 118–121 (NKCD), and 148–150 (SAK). A disordered region spans residues 170 to 194 (DANPASGGKGFKLRRQPSEPKRSCC). Residues 185-194 (QPSEPKRSCC) are compositionally biased toward basic and acidic residues. 2 S-geranylgeranyl cysteine lipidation sites follow: cysteine 193 and cysteine 194.

It belongs to the small GTPase superfamily. Rab family. In terms of assembly, binds EEA1. Interacts (in its GTP-bound form) with RINL. Interacts directly with ZFYVE20. Interacts (in its GTP-bound form) with RABGEF1. In terms of tissue distribution, detected in brain and heart, and at lower levels in lung and spleen.

The protein resides in the endosome membrane. Its subcellular location is the cell membrane. It is found in the early endosome. It localises to the late endosome. The protein localises to the cell projection. The protein resides in the ruffle. Its subcellular location is the cytoplasmic vesicle. It is found in the phagosome. It localises to the phagosome membrane. Its function is as follows. Plays a role in endocytosis and intracellular protein transport. Mediates trafficking of TF from early endosomes to recycling endosomes. Required for NGF-mediated endocytosis of NTRK1, and subsequent neurite outgrowth. Binds GTP and GDP and has low GTPase activity. Alternates between a GTP-bound active form and a GDP-bound inactive form. The polypeptide is Ras-related protein Rab-22A (Rab22a) (Mus musculus (Mouse)).